Consider the following 246-residue polypeptide: Probable transcriptional regulatory protein Rmag_0394 (246 aa).

Belongs to the TACO1 family.

The protein localises to the cytoplasm. This is Probable transcriptional regulatory protein Rmag_0394 from Ruthia magnifica subsp. Calyptogena magnifica.